A 698-amino-acid chain; its full sequence is Probable Xaa-Pro aminopeptidase P (698 aa).

Mn(2+) is bound by residues Asp509, Asp520, Glu604, and Glu618.

It belongs to the peptidase M24B family. Mn(2+) is required as a cofactor.

The catalysed reaction is Release of any N-terminal amino acid, including proline, that is linked to proline, even from a dipeptide or tripeptide.. Functionally, catalyzes the removal of a penultimate prolyl residue from the N-termini of peptides. This chain is Probable Xaa-Pro aminopeptidase P (AMPP), found in Arthroderma benhamiae (strain ATCC MYA-4681 / CBS 112371) (Trichophyton mentagrophytes).